We begin with the raw amino-acid sequence, 340 residues long: Coproporphyrin III ferrochelatase (340 aa).

Residues S52 and Y121 each coordinate Fe-coproporphyrin III. The Fe(2+) site is built by H181 and E264.

The protein belongs to the ferrochelatase family.

Its subcellular location is the cytoplasm. The enzyme catalyses Fe-coproporphyrin III + 2 H(+) = coproporphyrin III + Fe(2+). It functions in the pathway porphyrin-containing compound metabolism; protoheme biosynthesis. Functionally, involved in coproporphyrin-dependent heme b biosynthesis. Catalyzes the insertion of ferrous iron into coproporphyrin III to form Fe-coproporphyrin III. This Mycolicibacterium smegmatis (strain ATCC 700084 / mc(2)155) (Mycobacterium smegmatis) protein is Coproporphyrin III ferrochelatase.